The primary structure comprises 184 residues: dCTP deaminase (184 aa).

Position 107-112 (107-112 (KSTIAR)) interacts with dCTP. Glu-133 (proton donor/acceptor) is an active-site residue. 3 residues coordinate dCTP: Gln-152, Tyr-166, and Gln-176.

This sequence belongs to the dCTP deaminase family. Homotrimer.

It catalyses the reaction dCTP + H2O + H(+) = dUTP + NH4(+). It participates in pyrimidine metabolism; dUMP biosynthesis; dUMP from dCTP (dUTP route): step 1/2. In terms of biological role, catalyzes the deamination of dCTP to dUTP. In Roseiflexus castenholzii (strain DSM 13941 / HLO8), this protein is dCTP deaminase.